The primary structure comprises 352 residues: Homoserine O-acetyltransferase (352 aa).

The region spanning 37–330 (NAVLVCHALT…APHGHDTFLI (294 aa)) is the AB hydrolase-1 domain. S133 serves as the catalytic Nucleophile. R206 is a binding site for substrate. Catalysis depends on residues D296 and H325. Residue D326 coordinates substrate.

It belongs to the AB hydrolase superfamily. MetX family. In terms of assembly, homodimer.

Its subcellular location is the cytoplasm. It catalyses the reaction L-homoserine + acetyl-CoA = O-acetyl-L-homoserine + CoA. Its pathway is amino-acid biosynthesis; L-methionine biosynthesis via de novo pathway; O-acetyl-L-homoserine from L-homoserine: step 1/1. Functionally, transfers an acetyl group from acetyl-CoA to L-homoserine, forming acetyl-L-homoserine. The chain is Homoserine O-acetyltransferase from Salinibacter ruber (strain DSM 13855 / M31).